Consider the following 678-residue polypeptide: Glycine--tRNA ligase beta subunit (678 aa).

It belongs to the class-II aminoacyl-tRNA synthetase family. In terms of assembly, tetramer of two alpha and two beta subunits.

The protein localises to the cytoplasm. It carries out the reaction tRNA(Gly) + glycine + ATP = glycyl-tRNA(Gly) + AMP + diphosphate. The chain is Glycine--tRNA ligase beta subunit from Streptococcus pneumoniae (strain ATCC 700669 / Spain 23F-1).